The sequence spans 108 residues: L-rhamnose mutarotase (108 aa).

Tyr-19 lines the substrate pocket. His-23 acts as the Proton donor in catalysis. Substrate-binding positions include Tyr-45 and 80–81; that span reads WW.

Belongs to the rhamnose mutarotase family. Homodimer.

Its subcellular location is the cytoplasm. The enzyme catalyses alpha-L-rhamnose = beta-L-rhamnose. It functions in the pathway carbohydrate metabolism; L-rhamnose metabolism. In terms of biological role, involved in the anomeric conversion of L-rhamnose. The protein is L-rhamnose mutarotase of Ligilactobacillus salivarius (strain UCC118) (Lactobacillus salivarius).